We begin with the raw amino-acid sequence, 25 residues long: Small ribosomal subunit protein eS32 (25 aa).

Positions 1–25 are disordered; the sequence is MRAKWRKKRMRRLKRKRRKMRQRSK.

This sequence belongs to the eukaryotic ribosomal protein eS32 family. In terms of assembly, component of the large ribosomal subunit.

It is found in the cytoplasm. Functionally, component of the small ribosomal subunit. The ribosome is a large ribonucleoprotein complex responsible for the synthesis of proteins in the cell. This chain is Small ribosomal subunit protein eS32 (rpl41), found in Cyprinus carpio (Common carp).